The following is a 145-amino-acid chain: Arginine repressor (145 aa).

Belongs to the ArgR family.

The protein resides in the cytoplasm. The protein operates within amino-acid biosynthesis; L-arginine biosynthesis [regulation]. Regulates arginine biosynthesis genes. The polypeptide is Arginine repressor (Solibacter usitatus (strain Ellin6076)).